The chain runs to 764 residues: Nucleolar transcription factor 1 (764 aa).

N-acetylmethionine is present on methionine 1. A disordered region spans residues 1–21; that stretch reads MNGEADCPTDLEMAAPKGQDR. DNA-binding regions (HMG box) lie at residues 112 to 180 and 196 to 264; these read PKKP…ARFR and PEKP…RDYI. Threonine 201 is modified (phosphothreonine). Serine 273, serine 336, and serine 364 each carry phosphoserine. The segment at residues 298–362 is a DNA-binding region (HMG box 3); the sequence is TKPPPNSYSL…DYEVELLRFL (65 aa). The span at 370 to 379 shows a compositional bias: basic and acidic residues; sequence QQRVLGEEKM. The disordered stretch occupies residues 370–411; it reads QQRVLGEEKMLNINKKQTTSPASKKPSQEGGKGGSEKPKRPV. A phosphoserine mark is found at serine 389, serine 412, serine 433, serine 435, serine 484, serine 495, serine 546, serine 584, and serine 638. DNA-binding regions (HMG box) lie at residues 407-475, 482-549, and 568-634; these read PKRP…GGER, PESP…SEMR, and KKPP…DLWV. The segment at 456–488 is disordered; it reads YKAREAALKAQSERKPGGEREDRGKLPESPKRA. Positions 457-488 are enriched in basic and acidic residues; the sequence is KAREAALKAQSERKPGGEREDRGKLPESPKRA. A disordered region spans residues 546 to 576; the sequence is SEMRAPPAATNSSKKMKFQGEPKKPPMNGYQ. Positions 648 to 764 are disordered; the sequence is YISNKRKNMT…SGDSSDSDSN (117 aa). The segment covering 664–674 has biased composition (polar residues); sequence PKSSRTTLQSK. The span at 677–745 shows a compositional bias: acidic residues; it reads SEEDDDEEDD…DDDEDEDNES (69 aa). A compositionally biased stretch (low complexity) spans 746-758; it reads EGSSSSSSSSGDS.

Homodimer. Part of Pol I pre-initiation complex (PIC), in which Pol I core assembles with RRN3 and promoter-bound UTBF and SL1/TIF-IB complex. Interacts with TOP2A in the context of Pol I complex. Interacts with TBP. Interacts with TAF1A. Interacts with PHF6. Interacts with CEBPA (isoform 1 and isoform 4). Interacts with DDX11. Interacts with NOP53. Interacts with RASL11A. Interacts with DHX33. Binds to IRS1 and PIK3CA. Interacts with ALKBH2. In terms of processing, phosphorylated and activated by PIK3CA.

It localises to the nucleus. The protein localises to the nucleolus. Its function is as follows. Recognizes the ribosomal RNA gene promoter and activates transcription mediated by RNA polymerase I through cooperative interactions with the transcription factor SL1/TIF-IB complex. It binds specifically to the upstream control element. The chain is Nucleolar transcription factor 1 (Ubtf) from Rattus norvegicus (Rat).